The following is a 68-amino-acid chain: Cell division protein ZapB (68 aa).

Residues 3 to 58 (LELLSKLETKIQAALETIELLKMELEEEKQKNHTLNEQNQQLSQDLTSWNEKVTGL) are a coiled coil.

This sequence belongs to the ZapB family. In terms of assembly, homodimer. The ends of the coiled-coil dimer bind to each other, forming polymers. Interacts with FtsZ.

It localises to the cytoplasm. Non-essential, abundant cell division factor that is required for proper Z-ring formation. It is recruited early to the divisome by direct interaction with FtsZ, stimulating Z-ring assembly and thereby promoting cell division earlier in the cell cycle. Its recruitment to the Z-ring requires functional FtsA or ZipA. The chain is Cell division protein ZapB from Shewanella loihica (strain ATCC BAA-1088 / PV-4).